The chain runs to 452 residues: Pup--protein ligase (452 aa).

Residue glutamate 9 participates in Mg(2+) binding. Arginine 53 provides a ligand contact to ATP. Tyrosine 55 contacts Mg(2+). Aspartate 57 serves as the catalytic Proton acceptor. Glutamate 63 lines the Mg(2+) pocket. Residues threonine 66 and tryptophan 419 each contribute to the ATP site.

Belongs to the Pup ligase/Pup deamidase family. Pup-conjugating enzyme subfamily.

It catalyses the reaction ATP + [prokaryotic ubiquitin-like protein]-L-glutamate + [protein]-L-lysine = ADP + phosphate + N(6)-([prokaryotic ubiquitin-like protein]-gamma-L-glutamyl)-[protein]-L-lysine.. It functions in the pathway protein degradation; proteasomal Pup-dependent pathway. Its pathway is protein modification; protein pupylation. Catalyzes the covalent attachment of the prokaryotic ubiquitin-like protein modifier Pup to the proteasomal substrate proteins, thereby targeting them for proteasomal degradation. This tagging system is termed pupylation. The ligation reaction involves the side-chain carboxylate of the C-terminal glutamate of Pup and the side-chain amino group of a substrate lysine. The polypeptide is Pup--protein ligase (Streptosporangium roseum (strain ATCC 12428 / DSM 43021 / JCM 3005 / KCTC 9067 / NCIMB 10171 / NRRL 2505 / NI 9100)).